Consider the following 267-residue polypeptide: Hydroxyethylthiazole kinase (267 aa).

Position 44 (Met-44) interacts with substrate. ATP-binding residues include Arg-120 and Thr-165. A substrate-binding site is contributed by Gly-192.

This sequence belongs to the Thz kinase family. Mg(2+) is required as a cofactor.

The enzyme catalyses 5-(2-hydroxyethyl)-4-methylthiazole + ATP = 4-methyl-5-(2-phosphooxyethyl)-thiazole + ADP + H(+). The protein operates within cofactor biosynthesis; thiamine diphosphate biosynthesis; 4-methyl-5-(2-phosphoethyl)-thiazole from 5-(2-hydroxyethyl)-4-methylthiazole: step 1/1. Functionally, catalyzes the phosphorylation of the hydroxyl group of 4-methyl-5-beta-hydroxyethylthiazole (THZ). The chain is Hydroxyethylthiazole kinase from Carboxydothermus hydrogenoformans (strain ATCC BAA-161 / DSM 6008 / Z-2901).